The sequence spans 835 residues: Disease resistance protein RPP13 (835 aa).

Residues 25 to 41 adopt a coiled-coil conformation; it reads MAVKEDLEELKTELTCI. The region spanning 144–453 is the NB-ARC domain; it reads SSLRVRQLRR…AEGFIQGDEE (310 aa). 192–199 is a binding site for ATP; that stretch reads GMGGLGKT.

The protein belongs to the disease resistance NB-LRR family. RPP13 subfamily.

In terms of biological role, disease resistance protein. Resistance proteins guard the plant against pathogens that contain an appropriate avirulence protein via an indirect interaction with this avirulence protein. That triggers a defense system including the hypersensitive response, which restricts the pathogen growth. In contrast to other resistance proteins, it works independently of ESD1 and NSD1 proteins and does not require the accumulation of salicylic acid, suggesting the existence of an independent signaling pathway. The specificity to avirulence proteins differs in the different cultivars. The protein is Disease resistance protein RPP13 (RPP13) of Arabidopsis thaliana (Mouse-ear cress).